The primary structure comprises 238 residues: Large ribosomal subunit protein uL1 (238 aa).

The protein belongs to the universal ribosomal protein uL1 family. Part of the 50S ribosomal subunit.

Its function is as follows. Binds directly to 23S rRNA. The L1 stalk is quite mobile in the ribosome, and is involved in E site tRNA release. Functionally, protein L1 is also a translational repressor protein, it controls the translation of the L11 operon by binding to its mRNA. This is Large ribosomal subunit protein uL1 from Salinispora arenicola (strain CNS-205).